Reading from the N-terminus, the 728-residue chain is Catalase-peroxidase 1 (728 aa).

A cross-link (tryptophyl-tyrosyl-methioninium (Trp-Tyr) (with M-244)) is located at residues 91–218 (WHSAGTYRIA…LAAVQMGLIY (128 aa)). Histidine 92 functions as the Proton acceptor in the catalytic mechanism. Positions 218 to 244 (YVNPEGPDGNPDPVAAARDIRDTFARM) form a cross-link, tryptophyl-tyrosyl-methioninium (Tyr-Met) (with W-91). Histidine 259 is a heme b binding site.

Belongs to the peroxidase family. Peroxidase/catalase subfamily. Homodimer or homotetramer. Requires heme b as cofactor. In terms of processing, formation of the three residue Trp-Tyr-Met cross-link is important for the catalase, but not the peroxidase activity of the enzyme.

The catalysed reaction is H2O2 + AH2 = A + 2 H2O. It catalyses the reaction 2 H2O2 = O2 + 2 H2O. Its function is as follows. Bifunctional enzyme with both catalase and broad-spectrum peroxidase activity. The chain is Catalase-peroxidase 1 from Burkholderia ambifaria (strain ATCC BAA-244 / DSM 16087 / CCUG 44356 / LMG 19182 / AMMD) (Burkholderia cepacia (strain AMMD)).